Consider the following 357-residue polypeptide: tRNA/tmRNA (uracil-C(5))-methyltransferase (357 aa).

Residues Q180, Y209, N214, E230, and D290 each contribute to the S-adenosyl-L-methionine site. The active-site Nucleophile is C315. The Proton acceptor role is filled by E349.

The protein belongs to the class I-like SAM-binding methyltransferase superfamily. RNA M5U methyltransferase family. TrmA subfamily.

The catalysed reaction is uridine(54) in tRNA + S-adenosyl-L-methionine = 5-methyluridine(54) in tRNA + S-adenosyl-L-homocysteine + H(+). It carries out the reaction uridine(341) in tmRNA + S-adenosyl-L-methionine = 5-methyluridine(341) in tmRNA + S-adenosyl-L-homocysteine + H(+). Functionally, dual-specificity methyltransferase that catalyzes the formation of 5-methyluridine at position 54 (m5U54) in all tRNAs, and that of position 341 (m5U341) in tmRNA (transfer-mRNA). The chain is tRNA/tmRNA (uracil-C(5))-methyltransferase from Campylobacter jejuni subsp. jejuni serotype O:2 (strain ATCC 700819 / NCTC 11168).